The sequence spans 96 residues: DNA-directed RNA polymerase subunit Rpo11 (96 aa).

It belongs to the archaeal Rpo11/eukaryotic RPB11/RPC19 RNA polymerase subunit family. As to quaternary structure, part of the RNA polymerase complex.

The protein resides in the cytoplasm. The catalysed reaction is RNA(n) + a ribonucleoside 5'-triphosphate = RNA(n+1) + diphosphate. Its function is as follows. DNA-dependent RNA polymerase (RNAP) catalyzes the transcription of DNA into RNA using the four ribonucleoside triphosphates as substrates. This Methanococcus maripaludis (strain C6 / ATCC BAA-1332) protein is DNA-directed RNA polymerase subunit Rpo11.